Reading from the N-terminus, the 1250-residue chain is MQPWQCLRRFALAWWERTAEGRARSPREEVGPRDPGGRGEPDPERSSPPMLSADDAEYPREYRTLGGGGGGGSGGRRFSNVGLVHTSERRHTVIAAQSLEALSGLQKADADRKRDAFMDHLKSKYPQHALALRGQQDRMREQVGGWTVDPVCLLSSLCSHLHGDSTPSGAGQPAQQPNYWSFKTRSSRHTQGAQPGLADQAAKLSYASAESLETMSEAELPLGFSRMNRFRQSLPLSRSASQTKLRSPGVLFLQFGEETRRVHITHEVSSLDTLHALIAHMFPQKLTMGMLKSPNTAILIKDEARNVFYELEDVRDIQDRSIIKIYRKEPLYAAFPGSHLTNGDLRREMVYASRESSPTRRLNNLSPASHLASSSPPPGLPSGLPSGLPSGSPSRSRLSYAGGRPPSYAGSPVHHAAERLGGAPTGQGVSPSPSAILERRDVKPDEDLAGKAGGMVLVKGEGLYADPYGLLHEGRLSLAAAAETHSHTRARAACTSGVPCALSAPTPLPRCSPTWRTRCTRRALAALYGDGYGFRLPPSSPQKLADVSAPSGGPPPPHSPYSGPPSRGSPVRQSFRKDSGSSSVFAESPGGKARSTGSASTAGAPPSELFPGPGERSLVGFGPPVPAKDTETRERMEAMEKQIASLTGLVQSALLRGSEPETPSEKVEGSNGAATPSAPVCGSGSKSSGATPVSGPPPPSASSTPAGQPTAVSRLQMQLHLRGLQNSASDLRGQLQQLRNVQLQNQESVRALLKPTEADVSMRVSEAARRQEDPLQRQRTLVEEERLRYLNDEELITQQLNDLEKSVEKIQRDVAHNHRLMPGPELEEKALVLKQLGETLTELKAHFPGLQSKMRVVLRVEVEAVKFLKEEPQRLDGLLKRCRGVTDTLAQIRRQVDEGMWPPPNNLLNQSPKKVAAETDFSKGLDFEIPPPSPPLNLHELSGPAEGTPLTPKSTNPTKCLDASSKRNTDKAVSVEAAERDWEEKRAALTQYSAKDINRLLEETQAELLKAIPDLDCASKTHPGPAPTPDHKPPKAPHGQKAAPRTEPSGRRGSDELTVPRYRTEKPSKSPPPPPPRRSFPSSHGLTTTRTGEVVVTSKKDSVFIKKAESEELEVQKPQVKLRRAVSEVVRPASTPPIMASAIKDEDDEERIIAELESGGSSVPPMKVVTPGASRLKAAQGPAGSPDKGKHGKQRTEYMRIQAQQQATKPSKEVSGPNETSSPGSEKPSGSRTSIPVLTSFGARNSSISF.

The segment covering 19 to 45 (AEGRARSPREEVGPRDPGGRGEPDPER) has biased composition (basic and acidic residues). The tract at residues 19–78 (AEGRARSPREEVGPRDPGGRGEPDPERSSPPMLSADDAEYPREYRTLGGGGGGGSGGRRF) is disordered. Residues Ser-47 and Ser-52 each carry the phosphoserine modification. The span at 65–75 (LGGGGGGGSGG) shows a compositional bias: gly residues. Residue Ser-79 is modified to Phosphoserine. A Phosphothreonine modification is found at Thr-86. 7 positions are modified to phosphoserine: Ser-87, Ser-98, Ser-211, Ser-233, Ser-237, Ser-247, and Ser-293. A Phosphotyrosine modification is found at Tyr-309. Residues 352 to 448 (ASRESSPTRR…RRDVKPDEDL (97 aa)) form a disordered region. The span at 354 to 364 (RESSPTRRLNN) shows a compositional bias: polar residues. The span at 365 to 374 (LSPASHLASS) shows a compositional bias: low complexity. 3 positions are modified to phosphoserine: Ser-366, Ser-375, and Ser-392. Low complexity predominate over residues 381 to 399 (PSGLPSGLPSGSPSRSRLS). 2 positions are modified to omega-N-methylarginine: Arg-397 and Arg-404. Phosphoserine is present on residues Ser-411, Ser-430, and Ser-432. Over residues 437–448 (LERRDVKPDEDL) the composition is skewed to basic and acidic residues. Tyr-464 is modified (phosphotyrosine). Residues 538 to 710 (PSSPQKLADV…ASSTPAGQPT (173 aa)) form a disordered region. A compositionally biased stretch (pro residues) spans 552-563 (GGPPPPHSPYSG). Residues Ser-559, Ser-562, and Ser-566 each carry the phosphoserine modification. Arg-567 is modified (omega-N-methylarginine). A phosphoserine mark is found at Ser-569, Ser-579, Ser-581, Ser-583, and Ser-588. Low complexity predominate over residues 590-607 (GGKARSTGSASTAGAPPS). The span at 628 to 640 (KDTETRERMEAME) shows a compositional bias: basic and acidic residues. Residues Ser-664 and Ser-688 each carry the phosphoserine modification. A phosphothreonine mark is found at Thr-691 and Thr-704. Low complexity predominate over residues 701-710 (ASSTPAGQPT). 2 coiled-coil regions span residues 712–753 (VSRL…RALL) and 793–813 (EELITQQLNDLEKSVEKIQRD). The segment at 714-764 (RLQMQLHLRGLQNSASDLRGQLQQLRNVQLQNQESVRALLKPTEADVSMRV) is interaction with SNAP25. Residues Ser-911 and Ser-933 each carry the phosphoserine modification. Disordered stretches follow at residues 924-982 (GLDF…ERDW) and 1016-1094 (DCAS…TGEV). Phosphothreonine is present on Thr-951. Phosphoserine is present on Ser-1054. Over residues 1069-1078 (KSPPPPPPRR) the composition is skewed to pro residues. Ser-1110 and Ser-1127 each carry phosphoserine. Positions 1155-1250 (ELESGGSSVP…FGARNSSISF (96 aa)) are disordered. The span at 1217 to 1250 (PNETSSPGSEKPSGSRTSIPVLTSFGARNSSISF) shows a compositional bias: polar residues.

Belongs to the SRCIN1 family. In terms of assembly, interacts with the N-terminal coiled-coil region of SNAP25. Interacts with BCAR1/p130Cas and SRC through its C-terminal domain. Interacts with CSK, CTTN, SORBS3/vinexin, SYP and MAPRE3/EB3. Tyrosine-phosphorylated in response to EGF and to cell adhesion to integrin ligands. Expressed predominantly in central nervous system with high levels detected in cortex, cerebellum, midbrain and spinal cord (at protein level). Also expressed in testis and epithelial-rich tissues such as mammary gland, lung and kidney.

The protein resides in the cytoplasm. It is found in the cytoskeleton. Its subcellular location is the cell projection. The protein localises to the axon. It localises to the dendrite. The protein resides in the presynapse. It is found in the postsynapse. Its subcellular location is the postsynaptic density. Functionally, acts as a negative regulator of SRC by activating CSK which inhibits SRC activity and downstream signaling, leading to impaired cell spreading and migration. Regulates dendritic spine morphology. Involved in calcium-dependent exocytosis. May play a role in neurotransmitter release or synapse maintenance. In Mus musculus (Mouse), this protein is SRC kinase signaling inhibitor 1 (Srcin1).